Consider the following 1518-residue polypeptide: Hormone receptor 4 (1518 aa).

5 disordered regions span residues 30-50 (RCSS…DLLA), 145-327 (TSST…KLSE), 380-587 (PSRI…QPQA), 672-820 (VGVG…SSVA), and 887-913 (SSNS…EPTD). The span at 34–46 (DGESIADTSTSSP) shows a compositional bias: polar residues. Composition is skewed to low complexity over residues 145-189 (TSST…SSSG) and 208-219 (SSSSAISAAAAS). Residues 238 to 260 (EGGGPAGDGSGATGGGNTSGGST) are compositionally biased toward gly residues. Residues 291 to 323 (STTTTTGRPTLTPTNGVLSSASAGTGISTGSSA) show a composition bias toward low complexity. Residues 400–429 (QRERERERDRERDRERERERDRDREREREQ) are compositionally biased toward basic and acidic residues. Composition is skewed to polar residues over residues 430–451 (SISS…QLSH) and 475–489 (RKSS…SQSM). Composition is skewed to low complexity over residues 490 to 529 (QHLT…PHSL), 546 to 586 (HHQQ…QQPQ), 681 to 705 (GSVQ…QTPS), and 738 to 799 (GQSH…PSSS). Gly residues-rich tracts occupy residues 800-812 (SGGG…GVGG) and 892-902 (GLGGVGGGMGG). A DNA-binding region (nuclear receptor) is located at residues 918-993 (PLVCMICEDK…QGMVLQAVRE (76 aa)). NR C4-type zinc fingers lie at residues 921–941 (CMIC…CEGC) and 957–976 (CVAD…CQYC). Disordered regions lie at residues 1015 to 1101 (KHKK…AAVA), 1142 to 1210 (LLQA…LPPH), and 1341 to 1371 (KRRG…STPI). Over residues 1021–1060 (QKQQQQAAQQQQQQAAAQQQHQQQQQHQQHQQHQQQQLHS) the composition is skewed to low complexity. Basic residues predominate over residues 1061–1077 (PLHHHHHQGHQSHHAQQ). Low complexity-rich tracts occupy residues 1078–1101 (QHHP…AAVA) and 1144–1193 (QAPP…HHQQ). Residues 1194–1205 (QGGGGGGAGGGA) show a composition bias toward gly residues. The NR LBD domain occupies 1250–1518 (HALGMIQTLI…PFVLNSASIR (269 aa)). Low complexity predominate over residues 1351-1368 (HGSPASTPLSTPTGTPLS).

The protein belongs to the nuclear hormone receptor family. NR1 subfamily. As to expression, during L2 and L3 stages, strong constitutive expression is seen in the ring gland. Lower expression is detected in specific neurons of the central nervous system (CNS) (at protein level).

The protein localises to the nucleus. Its function is as follows. Coordinates growth and maturation by mediating endocrine responses to the attainment of critical weight during larval development. Plays a central role in the genetic cascades triggered by the steroid hormone ecdysone at the onset of metamorphosis, acting as both a repressor of the early ecdysone-induced regulatory genes and an inducer of the ftz-f1 midprepupal competence factor. This is Hormone receptor 4 (Hr4) from Drosophila melanogaster (Fruit fly).